We begin with the raw amino-acid sequence, 415 residues long: Mitogen-activated protein kinase MPS1 (415 aa).

Residues 23-314 form the Protein kinase domain; that stretch reads YTVTKELGQG…VEQALEHPYL (292 aa). ATP-binding positions include 29-37 and K52; that span reads LGQGAYGIV. Positions 363–394 are disordered; it reads GAGGHGAPHAPQVPIPAGAGQGQWKAEDPRPQ.

Belongs to the protein kinase superfamily. Ser/Thr protein kinase family. MAP kinase subfamily. In terms of assembly, interacts with transcription factor MIG1. Interacts with transcription factor SWI6. The cofactor is Mg(2+).

It carries out the reaction L-seryl-[protein] + ATP = O-phospho-L-seryl-[protein] + ADP + H(+). It catalyses the reaction L-threonyl-[protein] + ATP = O-phospho-L-threonyl-[protein] + ADP + H(+). Mitogen-activated protein kinase; part of the MCK1-MKK2-MPS1 MAP kinase (MAPK) signal transduction cascade that is essential for cell wall integrity and plant infection, but not for plant defense responses. Beside its role in pathogenesis, the MPS1 cascade is active in conidiation and cellular stress responses. Targets downstream of the MPS1-MAPK pathway include transcription factors MIG1 and SWI6, as well as GSK1 and MPG1. In Pyricularia oryzae (strain 70-15 / ATCC MYA-4617 / FGSC 8958) (Rice blast fungus), this protein is Mitogen-activated protein kinase MPS1.